Consider the following 87-residue polypeptide: Small ribosomal subunit protein uS17 (87 aa).

Belongs to the universal ribosomal protein uS17 family. Part of the 30S ribosomal subunit.

Functionally, one of the primary rRNA binding proteins, it binds specifically to the 5'-end of 16S ribosomal RNA. The sequence is that of Small ribosomal subunit protein uS17 from Thioalkalivibrio sulfidiphilus (strain HL-EbGR7).